The following is a 68-amino-acid chain: U1-hexatoxin-Hv1a (68 aa).

5 disulfides stabilise this stretch: Cys-3-Cys-14, Cys-8-Cys-22, Cys-13-Cys-48, Cys-32-Cys-56, and Cys-50-Cys-63.

It belongs to the MIT-like AcTx family. Expressed by the venom gland.

The protein resides in the secreted. The protein is U1-hexatoxin-Hv1a of Hadronyche versuta (Blue mountains funnel-web spider).